The primary structure comprises 264 residues: Thymidylate synthase (264 aa).

Arginine 21 contributes to the dUMP binding site. Histidine 51 is a binding site for (6R)-5,10-methylene-5,6,7,8-tetrahydrofolate. 126–127 (RR) is a binding site for dUMP. The Nucleophile role is filled by cysteine 146. DUMP is bound by residues 166-169 (RSAD), asparagine 177, and 207-209 (HIY). Aspartate 169 is a binding site for (6R)-5,10-methylene-5,6,7,8-tetrahydrofolate. Serine 263 contributes to the (6R)-5,10-methylene-5,6,7,8-tetrahydrofolate binding site.

It belongs to the thymidylate synthase family. Bacterial-type ThyA subfamily. In terms of assembly, homodimer.

The protein localises to the cytoplasm. The catalysed reaction is dUMP + (6R)-5,10-methylene-5,6,7,8-tetrahydrofolate = 7,8-dihydrofolate + dTMP. It participates in pyrimidine metabolism; dTTP biosynthesis. Functionally, catalyzes the reductive methylation of 2'-deoxyuridine-5'-monophosphate (dUMP) to 2'-deoxythymidine-5'-monophosphate (dTMP) while utilizing 5,10-methylenetetrahydrofolate (mTHF) as the methyl donor and reductant in the reaction, yielding dihydrofolate (DHF) as a by-product. This enzymatic reaction provides an intracellular de novo source of dTMP, an essential precursor for DNA biosynthesis. In Exiguobacterium sp. (strain ATCC BAA-1283 / AT1b), this protein is Thymidylate synthase.